A 376-amino-acid polypeptide reads, in one-letter code: 23S rRNA (uracil(747)-C(5))-methyltransferase RlmC (376 aa).

The [4Fe-4S] cluster site is built by C3, C11, C14, and C87. Positions 212, 241, 262, and 307 each coordinate S-adenosyl-L-methionine. C334 functions as the Nucleophile in the catalytic mechanism.

It belongs to the class I-like SAM-binding methyltransferase superfamily. RNA M5U methyltransferase family. RlmC subfamily.

It catalyses the reaction uridine(747) in 23S rRNA + S-adenosyl-L-methionine = 5-methyluridine(747) in 23S rRNA + S-adenosyl-L-homocysteine + H(+). Its function is as follows. Catalyzes the formation of 5-methyl-uridine at position 747 (m5U747) in 23S rRNA. The chain is 23S rRNA (uracil(747)-C(5))-methyltransferase RlmC from Salmonella choleraesuis (strain SC-B67).